A 432-amino-acid chain; its full sequence is tRNA(Ile)-lysidine synthase (432 aa).

Residue 19-24 participates in ATP binding; it reads STGIDS.

This sequence belongs to the tRNA(Ile)-lysidine synthase family.

The protein resides in the cytoplasm. The enzyme catalyses cytidine(34) in tRNA(Ile2) + L-lysine + ATP = lysidine(34) in tRNA(Ile2) + AMP + diphosphate + H(+). Functionally, ligates lysine onto the cytidine present at position 34 of the AUA codon-specific tRNA(Ile) that contains the anticodon CAU, in an ATP-dependent manner. Cytidine is converted to lysidine, thus changing the amino acid specificity of the tRNA from methionine to isoleucine. The sequence is that of tRNA(Ile)-lysidine synthase from Staphylococcus epidermidis (strain ATCC 35984 / DSM 28319 / BCRC 17069 / CCUG 31568 / BM 3577 / RP62A).